Here is an 80-residue protein sequence, read N- to C-terminus: Cell division protein ZapB (80 aa).

A coiled-coil region spans residues 3 to 80; sequence LEILEQLEAK…GLLGKMDEVE (78 aa). A disordered region spans residues 41–60; that stretch reads LEQANNGRSEVEQEAQRARD. Residues 49–60 show a composition bias toward basic and acidic residues; the sequence is SEVEQEAQRARD.

It belongs to the ZapB family. As to quaternary structure, homodimer. The ends of the coiled-coil dimer bind to each other, forming polymers. Interacts with FtsZ.

The protein resides in the cytoplasm. Functionally, non-essential, abundant cell division factor that is required for proper Z-ring formation. It is recruited early to the divisome by direct interaction with FtsZ, stimulating Z-ring assembly and thereby promoting cell division earlier in the cell cycle. Its recruitment to the Z-ring requires functional FtsA or ZipA. The sequence is that of Cell division protein ZapB from Aliivibrio fischeri (strain ATCC 700601 / ES114) (Vibrio fischeri).